The chain runs to 526 residues: pH-sensitive chloride channel 2 (526 aa).

An N-terminal signal peptide occupies residues 1–18 (MDTLGIFVLISYLGLSSA). Residues 19–300 (AGVHLGDLQQ…VLLTREVGYY (282 aa)) lie on the Extracellular side of the membrane. Residues asparagine 33, asparagine 42, asparagine 52, asparagine 192, asparagine 231, asparagine 264, asparagine 271, and asparagine 283 are each glycosylated (N-linked (GlcNAc...) asparagine). The helical transmembrane segment at 301-321 (VIDYFLPSIMIVTISWVSFWL) threads the bilayer. Residues 322–327 (QADQTP) are Cytoplasmic-facing. Residues 328–347 (ARTTLGCTTLLSFITLSLSQ) form a helical membrane-spanning segment. At 348–360 (ENNLMKVSYVTMS) the chain is on the extracellular side. A helical membrane pass occupies residues 361 to 381 (EVWFLVCTIFIFGSLVEFAFV). The Cytoplasmic portion of the chain corresponds to 382-505 (NTIWRRNNDL…VSLWIDRKMR (124 aa)). Residues 463–488 (ISLDEQDETSTSESSDSSKEKPAQTF) are disordered. A helical membrane pass occupies residues 506–526 (FVFPLSFIVFNALFWTLVYCL).

Belongs to the ligand-gated ion channel (TC 1.A.9) family. In third-instar larvae, expressed in the principal cells of the excretory Malpighian tubules (at protein level). Also detected in the enterocytes of the copper cell region and the iron cell region of the larval midgut (at protein level). In the copper cell region expression is confined to the interstitial cells and in the iron cell region it is expressed in the anterior portion (at protein level). Expressed in the Malpighian tubules and the middle midgut of third instar larvae and adults.

Its subcellular location is the apical cell membrane. The protein localises to the cell projection. It is found in the microvillus membrane. The protein resides in the late endosome membrane. It localises to the lysosome membrane. It carries out the reaction chloride(in) = chloride(out). Functionally, ligand and pH-gated channel that mediates chloride transport primarily in the mid-gut and thereby functions in larval metabolism and fluid homeostasis. Channel opening is triggered by zinc binding or, to a lesser extent, an increase in extracellular pH. Zinc-dependent activity in the mid-gut is required for modulating Tor-dependent metabolic programs that promote larval feeding and systematic growth. It may therefore act as an intestinal zinc sensor that mediates larval growth and metabolism in response to micronutrient availability. Activates Tor signaling via its activity in maintaining lysosome homeostasis in interstitial cells and/or by its role in activating the release of insulin-like peptides in the brain after feeding, via an unknown mechanism. Functions in lysosome homeostasis by regulating chloride transport into enterocyte lysosomes to sustain V-ATPase function which maintains lysosomal acidification and consequently promotes Tor activation at the lysosome membrane. Also appears to play a role in regulating fluid secretion and osmotic homeostasis in Malpighian tubules in response to the pH of extracellular urine. This function is important for proper urine production during diuresis. In Drosophila melanogaster (Fruit fly), this protein is pH-sensitive chloride channel 2.